The chain runs to 669 residues: Acyl-coenzyme A oxidase 1 (669 aa).

FAD-binding residues include T152 and G191. The active-site Proton acceptor is the E434. Y544 bears the Phosphotyrosine mark. The residue at position 551 (S551) is a Phosphoserine. The Microbody targeting signal motif lies at 667–669 (AHL).

This sequence belongs to the acyl-CoA oxidase family. In terms of assembly, homodimer. Requires FAD as cofactor. Expressed in glia.

The protein resides in the peroxisome. Its subcellular location is the nucleus. The enzyme catalyses a 2,3-saturated acyl-CoA + O2 = a (2E)-enoyl-CoA + H2O2. The protein operates within lipid metabolism; peroxisomal fatty acid beta-oxidation. In terms of biological role, catalyzes the desaturation of acyl-CoAs to 2-trans-enoyl-CoAs. First enzyme of the fatty acid beta-oxidation pathway. The protein is Acyl-coenzyme A oxidase 1 of Drosophila melanogaster (Fruit fly).